The sequence spans 148 residues: Large ribosomal subunit protein uL15 (148 aa).

Residues 18-38 form a disordered region; the sequence is GYGRVGKHRKHPGGRGNAGGL.

Belongs to the universal ribosomal protein uL15 family.

This chain is Large ribosomal subunit protein uL15 (rpl27a), found in Dictyostelium discoideum (Social amoeba).